The following is a 351-amino-acid chain: Phospho-N-acetylmuramoyl-pentapeptide-transferase (351 aa).

10 consecutive transmembrane segments (helical) span residues Gly-3 to Ile-23, Thr-51 to Val-71, Pro-76 to Leu-96, Gly-113 to Phe-133, Phe-152 to Thr-172, Gly-181 to Gly-201, Pro-223 to Phe-243, Ile-250 to Thr-270, Leu-275 to Val-295, and Phe-329 to Met-349.

Belongs to the glycosyltransferase 4 family. MraY subfamily. It depends on Mg(2+) as a cofactor.

The protein resides in the cell membrane. The catalysed reaction is UDP-N-acetyl-alpha-D-muramoyl-L-alanyl-gamma-D-glutamyl-meso-2,6-diaminopimeloyl-D-alanyl-D-alanine + di-trans,octa-cis-undecaprenyl phosphate = di-trans,octa-cis-undecaprenyl diphospho-N-acetyl-alpha-D-muramoyl-L-alanyl-D-glutamyl-meso-2,6-diaminopimeloyl-D-alanyl-D-alanine + UMP. Its pathway is cell wall biogenesis; peptidoglycan biosynthesis. Functionally, catalyzes the initial step of the lipid cycle reactions in the biosynthesis of the cell wall peptidoglycan: transfers peptidoglycan precursor phospho-MurNAc-pentapeptide from UDP-MurNAc-pentapeptide onto the lipid carrier undecaprenyl phosphate, yielding undecaprenyl-pyrophosphoryl-MurNAc-pentapeptide, known as lipid I. The polypeptide is Phospho-N-acetylmuramoyl-pentapeptide-transferase (Thermobifida fusca (strain YX)).